The sequence spans 230 residues: 2-C-methyl-D-erythritol 4-phosphate cytidylyltransferase (230 aa).

The protein belongs to the IspD/TarI cytidylyltransferase family. IspD subfamily.

It catalyses the reaction 2-C-methyl-D-erythritol 4-phosphate + CTP + H(+) = 4-CDP-2-C-methyl-D-erythritol + diphosphate. It functions in the pathway isoprenoid biosynthesis; isopentenyl diphosphate biosynthesis via DXP pathway; isopentenyl diphosphate from 1-deoxy-D-xylulose 5-phosphate: step 2/6. Catalyzes the formation of 4-diphosphocytidyl-2-C-methyl-D-erythritol from CTP and 2-C-methyl-D-erythritol 4-phosphate (MEP). This chain is 2-C-methyl-D-erythritol 4-phosphate cytidylyltransferase, found in Synechocystis sp. (strain ATCC 27184 / PCC 6803 / Kazusa).